The chain runs to 600 residues: Elongation factor 4 (600 aa).

Residues 5 to 187 form the tr-type G domain; sequence KYIRNFSIIA…AIVNKLPPPK (183 aa). GTP is bound by residues 17 to 22 and 134 to 137; these read DHGKST and NKLD.

Belongs to the TRAFAC class translation factor GTPase superfamily. Classic translation factor GTPase family. LepA subfamily.

The protein localises to the cell inner membrane. It carries out the reaction GTP + H2O = GDP + phosphate + H(+). Functionally, required for accurate and efficient protein synthesis under certain stress conditions. May act as a fidelity factor of the translation reaction, by catalyzing a one-codon backward translocation of tRNAs on improperly translocated ribosomes. Back-translocation proceeds from a post-translocation (POST) complex to a pre-translocation (PRE) complex, thus giving elongation factor G a second chance to translocate the tRNAs correctly. Binds to ribosomes in a GTP-dependent manner. The chain is Elongation factor 4 from Rickettsia africae (strain ESF-5).